The following is a 358-amino-acid chain: Probable G-protein coupled receptor 25 (358 aa).

Over Met-1–Pro-43 the chain is Extracellular. A helical membrane pass occupies residues Ala-44 to Leu-64. The Cytoplasmic portion of the chain corresponds to Ser-65–Thr-76. Residues Phe-77–Ala-97 form a helical membrane-spanning segment. Topologically, residues Ala-98–Lys-113 are extracellular. A disulfide bond links Cys-112 and Cys-191. Residues Val-114–Ser-134 form a helical membrane-spanning segment. Residues Val-135–Cys-155 are Cytoplasmic-facing. The chain crosses the membrane as a helical span at residues Val-156–Leu-176. The Extracellular portion of the chain corresponds to Tyr-177–Gln-200. Residues Gly-201 to Cys-221 form a helical membrane-spanning segment. The Cytoplasmic segment spans residues Tyr-222–Ser-239. Residues Leu-240–Leu-260 traverse the membrane as a helical segment. The Extracellular portion of the chain corresponds to Arg-261–Trp-284. Residues Gly-285–Leu-307 form a helical membrane-spanning segment. The Cytoplasmic segment spans residues Asp-308–Trp-358. Residues Asp-339–Trp-358 are disordered.

It belongs to the G-protein coupled receptor 1 family.

Its subcellular location is the membrane. Orphan receptor. This is Probable G-protein coupled receptor 25 (Gpr25) from Mus musculus (Mouse).